A 216-amino-acid chain; its full sequence is Ethylene-responsive transcription factor ERF016 (216 aa).

A DNA-binding region (AP2/ERF) is located at residues 6–63 (KYTGVRKRKWGKWVAEIRLPNSRDRIWLGSFDSAEKAARAFDAALYCLRGPGARFNFP). A disordered region spans residues 121–145 (EINSGSGGPTLGQVGEDNNNEGNSN). Residues 135–145 (GEDNNNEGNSN) are compositionally biased toward low complexity.

Belongs to the AP2/ERF transcription factor family. ERF subfamily.

It localises to the nucleus. Its function is as follows. Probably acts as a transcriptional activator. Binds to the GCC-box pathogenesis-related promoter element. May be involved in the regulation of gene expression by stress factors and by components of stress signal transduction pathways. This is Ethylene-responsive transcription factor ERF016 (ERF016) from Arabidopsis thaliana (Mouse-ear cress).